A 215-amino-acid chain; its full sequence is UPF0502 protein Shal_1801 (215 aa).

The protein belongs to the UPF0502 family.

This is UPF0502 protein Shal_1801 from Shewanella halifaxensis (strain HAW-EB4).